We begin with the raw amino-acid sequence, 178 residues long: Large ribosomal subunit protein uL6 (178 aa).

The protein belongs to the universal ribosomal protein uL6 family. In terms of assembly, part of the 50S ribosomal subunit.

Its function is as follows. This protein binds to the 23S rRNA, and is important in its secondary structure. It is located near the subunit interface in the base of the L7/L12 stalk, and near the tRNA binding site of the peptidyltransferase center. The protein is Large ribosomal subunit protein uL6 of Francisella tularensis subsp. holarctica (strain FTNF002-00 / FTA).